Reading from the N-terminus, the 431-residue chain is Histidine--tRNA ligase (431 aa).

The protein belongs to the class-II aminoacyl-tRNA synthetase family. Homodimer.

It is found in the cytoplasm. It catalyses the reaction tRNA(His) + L-histidine + ATP = L-histidyl-tRNA(His) + AMP + diphosphate + H(+). The chain is Histidine--tRNA ligase from Neisseria meningitidis serogroup C / serotype 2a (strain ATCC 700532 / DSM 15464 / FAM18).